A 493-amino-acid chain; its full sequence is Putative glycerol-3-phosphate transporter 5 (493 aa).

12 helical membrane-spanning segments follow: residues phenylalanine 25–histidine 44, leucine 83–histidine 103, phenylalanine 113–tryptophan 133, valine 145–glycine 165, serine 185–tryptophan 205, phenylalanine 207–valine 227, phenylalanine 292–leucine 312, glycine 328–isoleucine 348, isoleucine 352–methionine 372, valine 375–valine 395, alanine 428–isoleucine 448, and glycine 452–valine 472.

The protein belongs to the major facilitator superfamily. Organophosphate:Pi antiporter (OPA) (TC 2.A.1.4) family.

It is found in the membrane. This chain is Putative glycerol-3-phosphate transporter 5, found in Arabidopsis thaliana (Mouse-ear cress).